We begin with the raw amino-acid sequence, 125 residues long: UPF0102 protein PBPRA3228 (125 aa).

It belongs to the UPF0102 family.

This is UPF0102 protein PBPRA3228 from Photobacterium profundum (strain SS9).